Reading from the N-terminus, the 92-residue chain is Large ribosomal subunit protein bL28 (92 aa).

The protein belongs to the bacterial ribosomal protein bL28 family.

The protein is Large ribosomal subunit protein bL28 of Borrelia duttonii (strain Ly).